Consider the following 115-residue polypeptide: Autophagy-related protein 8i (115 aa).

G115 is lipidated: Phosphatidylethanolamine amidated glycine.

Belongs to the ATG8 family. As to quaternary structure, interacts with ATG4. Interacts with NBR1. Post-translationally, gly-115 forms then a thioester bond with the 'Cys-558' of ATG7 (E1-like activating enzyme) before being transferred to the 'Cys-258' of ATG3 (the specific E2 conjugating enzyme), in order to be finally amidated with phosphatidylethanolamine. This lipid modification anchors ATG8 to autophagosomes. In terms of tissue distribution, constitutively expressed.

The protein resides in the cytoplasmic vesicle. The protein localises to the autophagosome membrane. It is found in the vacuole membrane. It localises to the cytoplasm. Its subcellular location is the cytoskeleton. Functionally, ubiquitin-like modifier involved in autophagosomes formation. May mediate the delivery of the autophagosomes to the vacuole via the microtubule cytoskeleton. In Arabidopsis thaliana (Mouse-ear cress), this protein is Autophagy-related protein 8i (ATG8I).